The sequence spans 190 residues: Potassium-transporting ATPase KdpC subunit (190 aa).

The chain crosses the membrane as a helical span at residues 13–33; that stretch reads VGFLLLTLMCGVVYPGIVTIF.

This sequence belongs to the KdpC family. In terms of assembly, the system is composed of three essential subunits: KdpA, KdpB and KdpC.

Its subcellular location is the cell membrane. In terms of biological role, part of the high-affinity ATP-driven potassium transport (or Kdp) system, which catalyzes the hydrolysis of ATP coupled with the electrogenic transport of potassium into the cytoplasm. This subunit acts as a catalytic chaperone that increases the ATP-binding affinity of the ATP-hydrolyzing subunit KdpB by the formation of a transient KdpB/KdpC/ATP ternary complex. The polypeptide is Potassium-transporting ATPase KdpC subunit (Listeria monocytogenes serotype 4b (strain CLIP80459)).